We begin with the raw amino-acid sequence, 262 residues long: Zinc import ATP-binding protein ZnuC (262 aa).

In terms of domain architecture, ABC transporter spans 5-220; the sequence is IELQDICVDF…PSYLAMFGHR (216 aa). 37–44 contributes to the ATP binding site; the sequence is GPNGAGKS.

Belongs to the ABC transporter superfamily. Zinc importer (TC 3.A.1.15.5) family. In terms of assembly, the complex is composed of two ATP-binding proteins (ZnuC), two transmembrane proteins (ZnuB) and a solute-binding protein (ZnuA).

It is found in the cell inner membrane. It carries out the reaction Zn(2+)(out) + ATP(in) + H2O(in) = Zn(2+)(in) + ADP(in) + phosphate(in) + H(+)(in). Part of the ABC transporter complex ZnuABC involved in zinc import. Responsible for energy coupling to the transport system. In Vibrio cholerae serotype O1 (strain ATCC 39315 / El Tor Inaba N16961), this protein is Zinc import ATP-binding protein ZnuC.